The primary structure comprises 138 residues: Ribosome-binding factor A (138 aa).

It belongs to the RbfA family. As to quaternary structure, monomer. Binds 30S ribosomal subunits, but not 50S ribosomal subunits or 70S ribosomes.

It localises to the cytoplasm. In terms of biological role, one of several proteins that assist in the late maturation steps of the functional core of the 30S ribosomal subunit. Associates with free 30S ribosomal subunits (but not with 30S subunits that are part of 70S ribosomes or polysomes). Required for efficient processing of 16S rRNA. May interact with the 5'-terminal helix region of 16S rRNA. The polypeptide is Ribosome-binding factor A (Pseudoalteromonas atlantica (strain T6c / ATCC BAA-1087)).